A 524-amino-acid polypeptide reads, in one-letter code: Protein tweety homolog 3 (524 aa).

Over 1 to 42 (MAGVSYAAPWWVSLLHRLPHFDLRWEATSSQFRPEDADYQQA) the chain is Extracellular. A helical transmembrane segment spans residues 43–63 (LLLLGATALACLALDLLFLLF). Topologically, residues 64-86 (YSFWLCCRRRKTDEHLDADCCCT) are cytoplasmic. Residues 87-107 (AWCVIITTLVCSAGIAVGFYG) form a helical membrane-spanning segment. Topologically, residues 108–211 (NGETSDGIHR…VDLYDWYRWL (104 aa)) are extracellular. The Ca(2+) site is built by glutamate 110 and aspartate 113. N-linked (GlcNAc...) asparagine glycans are attached at residues asparagine 126 and asparagine 144. A helical membrane pass occupies residues 212-232 (GYLGLLLLDVIICLLVLVGLI). Over 233-236 (RSSK) the chain is Cytoplasmic. A helical membrane pass occupies residues 237-257 (GILVGVCLLGVLALVISWGAL). Residues 258–386 (GLELAVSVGS…LTGFCYDGVE (129 aa)) are Extracellular-facing. Cystine bridges form between cysteine 271–cysteine 381 and cysteine 299–cysteine 366. Residue asparagine 351 is glycosylated (N-linked (GlcNAc...) asparagine). Residues 387–407 (GLIYLALFSFVTALMFSSIVC) traverse the membrane as a helical segment. Topologically, residues 408-524 (SIPHTWQQKR…PRPDSSGSGH (117 aa)) are cytoplasmic. 2 disordered regions span residues 413 to 435 (WQQKRGPDDDGEEETAPGPRQAH) and 485 to 524 (RCENTPLIGRESPPPSYTSSMRAKYLATSQPRPDSSGSGH). Position 496 is a phosphoserine (serine 496). A PY-motif; mediates interaction with NEDD4L motif is present at residues 498–501 (PPSY). Polar residues predominate over residues 501-524 (YTSSMRAKYLATSQPRPDSSGSGH). Phosphoserine is present on residues serine 504 and serine 522.

Belongs to the tweety family. In terms of assembly, homotetramer; disulfide-linked. Forms cis-homodimers in the presence of Ca(2+). Interacts with NEDD4L. In terms of processing, ubiquitinated by NEDD4L. Post-translationally, N-glycosylated. In terms of tissue distribution, expressed in excitable tissues. Expressed in the brain, heart, skeletal muscle, colon, spleen, kidney and peripheral blood leukocytes. Also expressed in fat, the pancreas, thymus, and uterus.

The protein resides in the cell membrane. The catalysed reaction is chloride(in) = chloride(out). It carries out the reaction L-glutamate(out) = L-glutamate(in). With respect to regulation, inhibited by (4-[(2-butyl-6,7-dichloro-2- cyclopentyl-2,3-dihydro-1-oxo-1H-inden-5-yl)oxy]butanoic acid), genistein and PD98059 (MEK1 inhibitor). Its function is as follows. Calcium-independent, swelling-dependent volume-regulated anion channel (VRAC-swell) which plays a pivotal role in the process of regulatory volume decrease (RVD) in the brain through the efflux of anions like chloride and organic osmolytes like glutamate. Probable large-conductance Ca(2+)-activated chloride channel. This Mus musculus (Mouse) protein is Protein tweety homolog 3 (Ttyh3).